A 1115-amino-acid polypeptide reads, in one-letter code: Receptor-type tyrosine-protein phosphatase H (1115 aa).

Positions 1–27 are cleaved as a signal peptide; it reads MAGAGGGLGVWGNLVLLGLCSWTGARA. Residues 28–754 are Extracellular-facing; the sequence is PAPNPGRNLT…VVCHTESAGV (727 aa). Fibronectin type-III domains lie at 32-121, 122-209, 210-299, 300-387, 388-477, 478-563, 564-666, and 665-749; these read PGRN…APNP, VRNL…TAHN, PVRN…APNP, VRNL…TAPN, PVRN…VPNA, VTSL…TAAT, APNE…TYPD, and PDTV…VCHT. N35, N83, N172, N256, N285, N350, N434, N468, N556, and N642 each carry an N-linked (GlcNAc...) asparagine glycan. A helical transmembrane segment spans residues 755–775; the sequence is IAGAFVGILLFLILVGLLIFF. The Cytoplasmic portion of the chain corresponds to 776 to 1115; it reads LKRRNKKKQQ…AAIQAHKLEV (340 aa). The Tyrosine-protein phosphatase domain occupies 820 to 1079; the sequence is FADEYQQLSL…VFLHQCILRF (260 aa). Catalysis depends on C1020, which acts as the Phosphocysteine intermediate. 2 positions are modified to phosphotyrosine: Y1094 and Y1102.

The protein belongs to the protein-tyrosine phosphatase family. Receptor class 3 subfamily. In terms of assembly, homodimer; disulfide-linked. Interacts with LCK. Interacts (phosphorylated form) with GRB2 (via SH2 domain). Interacts (phosphorylated form) with FYN (via SH2 domain). Interacts (via extracellular domain) with CEACAM20 (via extracellular domain); the interaction dephosphorylates CEACAM20. Expressed at high levels in the brain, spleen and liver and at lower levels in the heart and stomach. Expressed in pancreatic and colorectal cancer cells, but not in normal pancreas or colon. Expression in hepatocellular carcinoma is related to the differentiation status of the tumor and expression is inversely related to tumor aggressiveness.

It localises to the cell projection. It is found in the microvillus membrane. The protein resides in the apical cell membrane. Its subcellular location is the cytoplasm. It carries out the reaction O-phospho-L-tyrosyl-[protein] + H2O = L-tyrosyl-[protein] + phosphate. With respect to regulation, regulated by reversible dimerization. Dimerization reduces its catalytic activity. In terms of biological role, protein phosphatase that may contribute to contact inhibition of cell growth and motility by mediating the dephosphorylation of focal adhesion-associated substrates and thus negatively regulating integrin-promoted signaling processes. Induces apoptotic cell death by at least two distinct mechanisms: inhibition of cell survival signaling mediated by PI 3-kinase, Akt, and ILK and activation of a caspase-dependent proapoptotic pathway. Inhibits the basal activity of LCK and its activation in response to TCR stimulation and TCR-induced activation of MAP kinase and surface expression of CD69. Inhibits TCR-induced tyrosine phosphorylation of LAT and ZAP70. Inhibits both basal activity of DOK1 and its CD2-induced tyrosine phosphorylation. Induces dephosphorylation of BCAR1, focal adhesion kinase and SRC. Reduces migratory activity of activity of Jurkat cells. Reduces tyrosine phosphorylation of CEACAM20 and thereby contributes to suppress the intestinal immune response CEACAM20. The protein is Receptor-type tyrosine-protein phosphatase H (PTPRH) of Homo sapiens (Human).